We begin with the raw amino-acid sequence, 384 residues long: GTPase Obg (384 aa).

The Obg domain occupies 1-159 (MKFIDEAKIE…RSLQLELKVL (159 aa)). The segment at 20-46 (ATSFRREKFVPRGGPDGGDGGKGGSVW) is disordered. The span at 33 to 43 (GPDGGDGGKGG) shows a compositional bias: gly residues. In terms of domain architecture, OBG-type G spans 160 to 348 (ADVGLLGMPN…LVHQINQYLT (189 aa)). Residues 166 to 173 (GMPNAGKS), 191 to 195 (FTTLH), 213 to 216 (DIPG), 284 to 287 (NKLD), and 329 to 331 (SAL) each bind GTP. Ser-173 and Thr-193 together coordinate Mg(2+).

This sequence belongs to the TRAFAC class OBG-HflX-like GTPase superfamily. OBG GTPase family. In terms of assembly, monomer. Mg(2+) serves as cofactor.

The protein localises to the cytoplasm. An essential GTPase which binds GTP, GDP and possibly (p)ppGpp with moderate affinity, with high nucleotide exchange rates and a fairly low GTP hydrolysis rate. Plays a role in control of the cell cycle, stress response, ribosome biogenesis and in those bacteria that undergo differentiation, in morphogenesis control. The protein is GTPase Obg of Neisseria meningitidis serogroup C (strain 053442).